The primary structure comprises 518 residues: Beta-secretase 2 (518 aa).

The first 20 residues, Met-1 to Ala-20, serve as a signal peptide directing secretion. Positions Ala-21–Leu-62 are excised as a propeptide. Over Ala-21 to Tyr-473 the chain is Extracellular. Residues Tyr-92 to Ala-429 enclose the Peptidase A1 domain. The active site involves Asp-110. N-linked (GlcNAc...) asparagine glycosylation is present at Asn-170. 3 disulfides stabilise this stretch: Cys-233/Cys-433, Cys-292/Cys-457, and Cys-344/Cys-393. The active site involves Asp-303. A glycan (N-linked (GlcNAc...) asparagine) is linked at Asn-366. The helical transmembrane segment at Ala-474–Phe-494 threads the bilayer. Over Arg-495–Lys-518 the chain is Cytoplasmic.

This sequence belongs to the peptidase A1 family. In terms of assembly, monomer. Interacts with RTN3 and RTN4. Post-translationally, undergoes autoproteolytic cleavage. Glycosylated. Brain. Present in neurons within the hippocampus, frontal cortex and temporal cortex (at protein level). Expressed at low levels in most peripheral tissues and at higher levels in colon, kidney, pancreas, placenta, prostate, stomach and trachea. Expressed at low levels in the brain. Found in spinal cord, medulla oblongata, substantia nigra and locus coruleus. Expressed in the ductal epithelium of both normal and malignant prostate.

It localises to the cell membrane. The protein resides in the golgi apparatus. The protein localises to the endoplasmic reticulum. Its subcellular location is the endosome. It is found in the melanosome. The enzyme catalyses Broad endopeptidase specificity. Cleaves Glu-Val-Asn-Leu-|-Asp-Ala-Glu-Phe in the Swedish variant of Alzheimer's amyloid precursor protein.. Responsible for the proteolytic processing of the amyloid precursor protein (APP). Cleaves APP, between residues 690 and 691, leading to the generation and extracellular release of beta-cleaved soluble APP, and a corresponding cell-associated C-terminal fragment which is later released by gamma-secretase. It has also been shown that it can cleave APP between residues 671 and 672. Involved in the proteolytic shedding of PMEL at early stages of melanosome biogenesis. Cleaves PMEL within the M-beta fragment to release the amyloidogenic PMEL luminal fragment containing M-alpha and a small portion of M-beta N-terminus. This is a prerequisite step for subsequent processing and assembly of PMEL fibrils into amyloid sheets. Responsible also for the proteolytic processing of CLTRN in pancreatic beta cells. This Homo sapiens (Human) protein is Beta-secretase 2 (BACE2).